Consider the following 468-residue polypeptide: uncharacterized protein (468 aa).

A signal peptide spans 1 to 27; sequence MRKWYFILLAGVLTSVILAFVYDKTKA. PbH1 repeat units lie at residues 125–154, 156–185, 189–214, 216–238, 249–283, 284–305, 312–334, and 397–420; these read KHDI…YVSG, SSHI…AVYG, MKDI…VLNG, IDGF…DLIG, VRNG…YVDG, GHDI…EATS, ANAI…SIGG, and NEGN…WMWK.

The protein localises to the secreted. This is an uncharacterized protein from Bacillus subtilis (strain 168).